Consider the following 275-residue polypeptide: Large ribosomal subunit protein uL2 (275 aa).

Residues 224-275 are disordered; that stretch reads AMNPVDHPHGGGEGKAPIGHPGPLTPWGKPALGYKTRKKGKASDKFIIRRRK. Residues 264–275 are compositionally biased toward basic and acidic residues; it reads KASDKFIIRRRK.

Belongs to the universal ribosomal protein uL2 family. As to quaternary structure, part of the 50S ribosomal subunit. Forms a bridge to the 30S subunit in the 70S ribosome.

Its function is as follows. One of the primary rRNA binding proteins. Required for association of the 30S and 50S subunits to form the 70S ribosome, for tRNA binding and peptide bond formation. It has been suggested to have peptidyltransferase activity; this is somewhat controversial. Makes several contacts with the 16S rRNA in the 70S ribosome. The polypeptide is Large ribosomal subunit protein uL2 (Thermoanaerobacter pseudethanolicus (strain ATCC 33223 / 39E) (Clostridium thermohydrosulfuricum)).